The sequence spans 363 residues: Peptide chain release factor 2 (363 aa).

At Gln251 the chain carries N5-methylglutamine.

This sequence belongs to the prokaryotic/mitochondrial release factor family. Methylated by PrmC. Methylation increases the termination efficiency of RF2.

The protein resides in the cytoplasm. In terms of biological role, peptide chain release factor 2 directs the termination of translation in response to the peptide chain termination codons UGA and UAA. This Helicobacter acinonychis (strain Sheeba) protein is Peptide chain release factor 2.